Consider the following 174-residue polypeptide: Ribosome maturation factor RimM (174 aa).

Positions 96–169 (EPDTYYDHQL…ILEIDPPDGL (74 aa)) constitute a PRC barrel domain.

The protein belongs to the RimM family. In terms of assembly, binds ribosomal protein uS19.

The protein localises to the cytoplasm. An accessory protein needed during the final step in the assembly of 30S ribosomal subunit, possibly for assembly of the head region. Essential for efficient processing of 16S rRNA. May be needed both before and after RbfA during the maturation of 16S rRNA. It has affinity for free ribosomal 30S subunits but not for 70S ribosomes. The sequence is that of Ribosome maturation factor RimM from Mycobacterium marinum (strain ATCC BAA-535 / M).